The following is a 205-amino-acid chain: Dephospho-CoA kinase (205 aa).

The region spanning 7-204 (LVGLTGGIGS…ARYLAAARAT (198 aa)) is the DPCK domain. 15-20 (GSGKSA) serves as a coordination point for ATP.

Belongs to the CoaE family.

The protein localises to the cytoplasm. It catalyses the reaction 3'-dephospho-CoA + ATP = ADP + CoA + H(+). It functions in the pathway cofactor biosynthesis; coenzyme A biosynthesis; CoA from (R)-pantothenate: step 5/5. Its function is as follows. Catalyzes the phosphorylation of the 3'-hydroxyl group of dephosphocoenzyme A to form coenzyme A. This chain is Dephospho-CoA kinase, found in Aromatoleum aromaticum (strain DSM 19018 / LMG 30748 / EbN1) (Azoarcus sp. (strain EbN1)).